We begin with the raw amino-acid sequence, 230 residues long: Thymidylate kinase (230 aa).

An ATP-binding site is contributed by 20–27 (GGEGAGKS).

The protein belongs to the thymidylate kinase family.

It carries out the reaction dTMP + ATP = dTDP + ADP. Functionally, phosphorylation of dTMP to form dTDP in both de novo and salvage pathways of dTTP synthesis. This chain is Thymidylate kinase, found in Rhodopseudomonas palustris (strain BisB18).